The sequence spans 237 residues: Phosphoribosylaminoimidazole-succinocarboxamide synthase (237 aa).

It belongs to the SAICAR synthetase family.

It carries out the reaction 5-amino-1-(5-phospho-D-ribosyl)imidazole-4-carboxylate + L-aspartate + ATP = (2S)-2-[5-amino-1-(5-phospho-beta-D-ribosyl)imidazole-4-carboxamido]succinate + ADP + phosphate + 2 H(+). The protein operates within purine metabolism; IMP biosynthesis via de novo pathway; 5-amino-1-(5-phospho-D-ribosyl)imidazole-4-carboxamide from 5-amino-1-(5-phospho-D-ribosyl)imidazole-4-carboxylate: step 1/2. This is Phosphoribosylaminoimidazole-succinocarboxamide synthase from Pseudomonas fluorescens (strain Pf0-1).